Here is a 183-residue protein sequence, read N- to C-terminus: Alkyl hydroperoxide reductase AhpD (183 aa).

The active-site Proton donor is the cysteine 132. Cysteine 132 and cysteine 135 are joined by a disulfide. Cysteine 135 serves as the catalytic Cysteine sulfenic acid (-SOH) intermediate.

Belongs to the AhpD family.

It catalyses the reaction N(6)-[(R)-dihydrolipoyl]-L-lysyl-[lipoyl-carrier protein] + a hydroperoxide = N(6)-[(R)-lipoyl]-L-lysyl-[lipoyl-carrier protein] + an alcohol + H2O. In terms of biological role, antioxidant protein with alkyl hydroperoxidase activity. Required for the reduction of the AhpC active site cysteine residues and for the regeneration of the AhpC enzyme activity. The protein is Alkyl hydroperoxide reductase AhpD of Acidobacterium capsulatum (strain ATCC 51196 / DSM 11244 / BCRC 80197 / JCM 7670 / NBRC 15755 / NCIMB 13165 / 161).